The chain runs to 867 residues: Cilium assembly protein DZIP1 (867 aa).

The mediates interaction with PCM1 stretch occupies residues 12–203 (MPFQKHVYYP…KANYYQCHFC (192 aa)). The mediates interaction with GLI3 and localization to the cilium basal body stretch occupies residues 12-367 (MPFQKHVYYP…QDFHNVMQLL (356 aa)). The segment at 154–278 (CDGEQSKKLL…SKEYEMQKTK (125 aa)) is required for interaction with DAZ1. The C2H2-type zinc finger occupies 198 to 221 (YQCHFCDKAFMNQAFLQSHIQRRH). Ser226 is subject to Phosphoserine; by PLK1. Coiled coils occupy residues 230-340 (YQKN…KSNI), 401-445 (TSMI…FTCN), and 568-588 (DQLH…EREI). The tract at residues 446–617 (PLNSISEPKG…EKALLSSDQC (172 aa)) is mediates interaction with GDI2 and RAB8A. 3 stretches are compositionally biased toward polar residues: residues 643–654 (LIRQKAVSTDRT), 671–680 (KSSTITTPPF), and 708–718 (NKGSFGKNTVK). Disordered stretches follow at residues 643 to 768 (LIRQ…GGTN) and 796 to 867 (SLEE…TSDV). A compositionally biased stretch (acidic residues) spans 722-733 (DGTEGSEIEDTD). Positions 807 to 823 (SGKEQKEPPPAKNEPHF) are enriched in basic and acidic residues. Over residues 848–859 (SSTLKSSLVTVT) the composition is skewed to low complexity.

This sequence belongs to the DZIP C2H2-type zinc-finger protein family. As to quaternary structure, interacts with DAZ1. Interacts with the BBSome; recruits the BBSome to centriolar satellites of the cilium. Interacts with PCM1; localizes DZIP1 and the associated BBSome to centriolar satellites. Interacts with RAB8A (GDP-bound inactive form); recruits RAB8A to the basal body of the cilium and prevents its inhibition by GDI2. Interacts with GDI2; negatively regulates the interaction of GDI2 with GDP-bound RAB8A. Interacts with GLI3; retains GLI3 within the cytoplasm. Interacts with CEP164. Interacts with IFT88. Phosphorylation at Ser-226 by PLK1 before mitosis prevents interaction with PCM1 and localization to centriolar satellites. Thereby, it negatively regulates the localization of the BBSome to centriolar satellites. Predominantly expressed in testis (at protein level). Also expressed in fetal brain, adult oocytes and ovary. Expressed in undifferentiated ES cells. In testis, it is specifically expressed in germ cells (at protein level). Expressed in mature germ cells and secondary spermatocytes, while it is weakly or not expressed in primary spermatocytes.

The protein localises to the cytoplasm. It localises to the cytoskeleton. Its subcellular location is the cilium basal body. The protein resides in the microtubule organizing center. It is found in the centrosome. The protein localises to the centriolar satellite. It localises to the centriole. Its subcellular location is the nucleus. The protein resides in the nucleus speckle. Functionally, molecular adapter that recruits protein complexes required for cilium assembly and function to the cilium basal body. At the exit of mitosis, localizes to the basal body and ciliary base of the forming primary cilium where it recruits and activates RAB8A to direct vesicle-mediated transport of proteins to the cilium. Also recruits the BBSome, a complex involved in cilium biogenesis, by bridging it to PCM1 at the centriolar satellites of the cilium. It is also required for the recruitment to the cilium basal body of the intraflagellar transport (IFT) machinery as well as the ciliary appendage proteins CEP164 and NINEIN. Functions as a regulator of Hedgehog signaling both through its role in cilium assembly but also probably through its ability to retain GLI3 within the cytoplasm. It is involved in spermatogenesis through its role in organization of the basal body and assembly of the sperm flagellum. Also indirectly involved in heart development through its function in ciliogenesis. The chain is Cilium assembly protein DZIP1 from Homo sapiens (Human).